We begin with the raw amino-acid sequence, 2869 residues long: uncharacterized protein (2869 aa).

Residues 1 to 10 (MNINRNNIND) show a composition bias toward low complexity. Disordered stretches follow at residues 1–132 (MNIN…SSNK), 171–349 (NNNN…DNYR), 380–485 (FNES…TSSS), 498–517 (KEKHNKKHENGDISESKPKK), 690–812 (NQNQ…NQNQ), 860–1074 (INNN…INSN), 1108–1175 (INNI…NSNS), 1188–1216 (SNSNGFNNNNSNDQRNIDSSSNSDIVDVD), 1224–1243 (VFIVDDTSSNKSNRASSVKT), 1340–1448 (ESNS…GNNI), 1476–1704 (IDNC…SNYY), 1731–1832 (NSNS…NEGF), and 2725–2773 (DRVR…NNNE). A compositionally biased stretch (polar residues) spans 14–25 (HSTSFNDNFDSF). Composition is skewed to low complexity over residues 26–124 (GNQN…NPKN), 171–348 (NNNN…YDNY), 388–414 (NNNTNFNNQTFGNNNKNQNNDNNLNNN), 421–446 (YYDNQYNSNIDNIGNSDDSIGGQTNK), and 454–478 (KNNNNNNNNNNNNNNNNNNNNNSNN). Residues 505-514 (HENGDISESK) are compositionally biased toward basic and acidic residues. 2 stretches are compositionally biased toward low complexity: residues 690–707 (NQNQKQNQNQNQKNQNHQ) and 714–749 (PQRQRYFPQDKPQNQNNQPPLQHQHQYQYQYQNQDQ). Basic and acidic residues predominate over residues 750 to 763 (YQDHDHEHEHDHDQ). The segment covering 764 to 781 (NQNQNQNQHQSRNQNQDQ) has biased composition (low complexity). Over residues 782–795 (YQDHDHEHEHDHDQ) the composition is skewed to basic and acidic residues. Composition is skewed to low complexity over residues 796–812 (NQNQNQYQSQNQQNQNQ), 860–891 (INNNNNNNNNNNNNNNNYYNYNQNQNQNQSQN), 898–911 (DNRINSNNSLSSRD), 921–991 (CDFN…SFNN), and 1000–1074 (NNHN…INSN). A compositionally biased stretch (low complexity) spans 1188–1212 (SNSNGFNNNNSNDQRNIDSSSNSDI). Over residues 1230-1243 (TSSNKSNRASSVKT) the composition is skewed to polar residues. Low complexity-rich tracts occupy residues 1377-1448 (DNGN…GNNI) and 1476-1639 (IDNC…NDND). Positions 1640–1659 (IGNDFDNDNDNDSYIDDDNN) are enriched in acidic residues. 3 stretches are compositionally biased toward low complexity: residues 1660–1704 (VYDN…SNYY), 1731–1823 (NSNS…NNNS), and 2739–2754 (SSSGSSIGNPSSSGGS). Residues 2758-2773 (NLDDSENESDSENNNE) are compositionally biased toward acidic residues.

This is an uncharacterized protein from Dictyostelium discoideum (Social amoeba).